The chain runs to 96 residues: MEQAPEDQGPQREPYNEWTLELLEELKSEAVRHFPRIWLHSLGQYIYETYGDTWAGVEALIRILQQLLFIHFRIGCQHSRIGITRQRRARNGSSRS.

Residues 1–42 (MEQAPEDQGPQREPYNEWTLELLEELKSEAVRHFPRIWLHSL) are homooligomerization. Phosphoserine; by host is present on residues Ser-79, Ser-94, and Ser-96.

This sequence belongs to the HIV-1 VPR protein family. In terms of assembly, homooligomer, may form homodimer. Interacts with p6-gag region of the Pr55 Gag precursor protein through a (Leu-X-X)4 motif near the C-terminus of the P6gag protein. Interacts with host UNG. May interact with host RAD23A/HHR23A. Interacts with host VPRBP/DCAF1, leading to hijack the CUL4A-RBX1-DDB1-DCAF1/VPRBP complex, mediating ubiquitination of host proteins such as TERT and ZGPAT and arrest of the cell cycle in G2 phase. Post-translationally, phosphorylated on several residues by host. These phosphorylations regulate VPR activity for the nuclear import of the HIV-1 pre-integration complex.

It is found in the virion. The protein resides in the host nucleus. It localises to the host extracellular space. Its function is as follows. During virus replication, may deplete host UNG protein, and incude G2-M cell cycle arrest. Acts by targeting specific host proteins for degradation by the 26S proteasome, through association with the cellular CUL4A-DDB1 E3 ligase complex by direct interaction with host VPRPB/DCAF-1. Cell cycle arrest reportedly occurs within hours of infection and is not blocked by antiviral agents, suggesting that it is initiated by the VPR carried into the virion. Additionally, VPR induces apoptosis in a cell cycle dependent manner suggesting that these two effects are mechanistically linked. Detected in the serum and cerebrospinal fluid of AIDS patient, VPR may also induce cell death to bystander cells. In terms of biological role, during virus entry, plays a role in the transport of the viral pre-integration (PIC) complex to the host nucleus. This function is crucial for viral infection of non-dividing macrophages. May act directly at the nuclear pore complex, by binding nucleoporins phenylalanine-glycine (FG)-repeat regions. The polypeptide is Protein Vpr (Human immunodeficiency virus type 1 group M subtype D (isolate Z2/CDC-Z34) (HIV-1)).